A 147-amino-acid chain; its full sequence is Large ribosomal subunit protein uL13 (147 aa).

Belongs to the universal ribosomal protein uL13 family. Part of the 50S ribosomal subunit.

This protein is one of the early assembly proteins of the 50S ribosomal subunit, although it is not seen to bind rRNA by itself. It is important during the early stages of 50S assembly. In Limosilactobacillus fermentum (strain NBRC 3956 / LMG 18251) (Lactobacillus fermentum), this protein is Large ribosomal subunit protein uL13.